The sequence spans 185 residues: CASP-like protein 2C1 (185 aa).

Over 1-12 (MVAARVSEVKAE) the chain is Cytoplasmic. A helical transmembrane segment spans residues 13 to 33 (GVLRGACAALAAAAALLVGLS). At 34 to 52 (TQTETVLLVRKKATVKDVQ) the chain is on the extracellular side. The chain crosses the membrane as a helical span at residues 53-73 (ALWVLAMAAAAAAGYHLLQLL). The Cytoplasmic segment spans residues 74–105 (KCFYLGRRVGGGASPCRRSSRALAWTCLLLDK). A helical membrane pass occupies residues 106–126 (ACAYTTFATTVAAAQACVIAL). Residues 127–147 (DGAHALQWTKLCNIYTRFCEQ) lie on the Extracellular side of the membrane. The helical transmembrane segment at 148-168 (IAGSLVLGMLAAVGTAVLSAA) threads the bilayer. The Cytoplasmic segment spans residues 169-185 (SARNVFRHYSPGTYAAH).

It belongs to the Casparian strip membrane proteins (CASP) family. In terms of assembly, homodimer and heterodimers.

The protein resides in the cell membrane. The protein is CASP-like protein 2C1 of Sorghum bicolor (Sorghum).